The following is a 156-amino-acid chain: 6,7-dimethyl-8-ribityllumazine synthase (156 aa).

5-amino-6-(D-ribitylamino)uracil-binding positions include Phe23, 57–59, and 81–83; these read AFE and AVI. A (2S)-2-hydroxy-3-oxobutyl phosphate-binding site is contributed by 86 to 87; it reads ST. The active-site Proton donor is His89. Residue Phe114 participates in 5-amino-6-(D-ribitylamino)uracil binding. Arg128 contacts (2S)-2-hydroxy-3-oxobutyl phosphate.

It belongs to the DMRL synthase family.

The enzyme catalyses (2S)-2-hydroxy-3-oxobutyl phosphate + 5-amino-6-(D-ribitylamino)uracil = 6,7-dimethyl-8-(1-D-ribityl)lumazine + phosphate + 2 H2O + H(+). It participates in cofactor biosynthesis; riboflavin biosynthesis; riboflavin from 2-hydroxy-3-oxobutyl phosphate and 5-amino-6-(D-ribitylamino)uracil: step 1/2. In terms of biological role, catalyzes the formation of 6,7-dimethyl-8-ribityllumazine by condensation of 5-amino-6-(D-ribitylamino)uracil with 3,4-dihydroxy-2-butanone 4-phosphate. This is the penultimate step in the biosynthesis of riboflavin. In Sulfurospirillum multivorans (Dehalospirillum multivorans), this protein is 6,7-dimethyl-8-ribityllumazine synthase.